The sequence spans 526 residues: piRNA biogenesis factor prde-1 (526 aa).

The disordered stretch occupies residues 436 to 526 (EAKEEPIDKK…RRRGCEIRRK (91 aa)). The segment covering 439–448 (EEPIDKKKDP) has biased composition (basic and acidic residues). Basic residues predominate over residues 458–467 (GKKRRGRKPK). A compositionally biased stretch (basic and acidic residues) spans 468-487 (KKDDPKMELKDEVKDLKDFV). The segment covering 489-498 (EESTSASSSA) has biased composition (low complexity).

In terms of tissue distribution, expressed in male and female germ cells.

It localises to the nucleus. The protein resides in the chromosome. Its function is as follows. Nuclear factor required for the production of piwi-interacting RNA (piRNA) precursors. Specifically required for piRNAs produced from loci associated with the Ruby motif. Promotes binding of the transcription factor snpc-4 at piRNA genomic clusters. Required for normal fertility. This is piRNA biogenesis factor prde-1 from Caenorhabditis elegans.